The following is a 133-amino-acid chain: Agouti-signaling protein (133 aa).

Residues 1–22 (MDVSRLLLATLLVCLCFLTAYS) form the signal peptide. A glycan (N-linked (GlcNAc...) asparagine) is linked at asparagine 39. The disordered stretch occupies residues 56–95 (NKKSKKISRNEAEKKKRPSKRKAPMKNVARTRPPPPTPCV). Over residues 70–79 (KKRPSKRKAP) the composition is skewed to basic residues. 5 disulfides stabilise this stretch: cysteine 94–cysteine 109, cysteine 101–cysteine 115, cysteine 108–cysteine 126, cysteine 112–cysteine 133, and cysteine 117–cysteine 124. In terms of domain architecture, Agouti spans 94–133 (CVATRDSCKPPAPACCDPCAFCQCRFFRSACSCRVLNPTC).

The protein resides in the secreted. In terms of biological role, involved in the regulation of melanogenesis. The binding of ASP to MC1R precludes alpha-MSH initiated signaling and thus blocks production of cAMP, leading to a down-regulation of eumelanogenesis (brown/black pigment) and thus increasing synthesis of pheomelanin (yellow/red pigment). The chain is Agouti-signaling protein (ASIP) from Bos taurus (Bovine).